The sequence spans 168 residues: G/U mismatch-specific DNA glycosylase (168 aa).

Belongs to the uracil-DNA glycosylase (UDG) superfamily. TDG/mug family. As to quaternary structure, binds DNA as a monomer.

The protein localises to the cytoplasm. The enzyme catalyses Specifically hydrolyzes mismatched double-stranded DNA and polynucleotides, releasing free uracil.. In terms of biological role, excises ethenocytosine and uracil, which can arise by alkylation or deamination of cytosine, respectively, from the corresponding mispairs with guanine in ds-DNA. It is capable of hydrolyzing the carbon-nitrogen bond between the sugar-phosphate backbone of the DNA and the mispaired base. The complementary strand guanine functions in substrate recognition. Required for DNA damage lesion repair in stationary-phase cells. The protein is G/U mismatch-specific DNA glycosylase of Salmonella choleraesuis (strain SC-B67).